Here is a 205-residue protein sequence, read N- to C-terminus: uncharacterized protein (205 aa).

It belongs to the flavoredoxin family. FMN is required as a cofactor.

This is an uncharacterized protein from Bacillus subtilis (strain 168).